The sequence spans 198 residues: Transcription factor IND (198 aa).

The interval 1–33 is disordered; the sequence is MENGMYKKKGVCDSCVSSKSRSNHSPKRSMMEP. A bHLH domain is found at 118–167; that stretch reads ISDDPQTVVARRRRERISEKIRILKRIVPGGAKMDTASMLDEAIRYTKFL.

Homodimer. Heterodimer; possibly with ALC. In terms of tissue distribution, after fertilization, it is expressed in stripes about four cells wide at the margins of developing wild-type fruit. Also expressed in the inner valve layer, which becomes lignified later in fruit development. Detected in roots.

The protein localises to the nucleus. Its function is as follows. Transcription regulator required for seed dispersal. Involved in the differentiation of all three cell types required for fruit dehiscence. Acts as the key regulator in a network including SHP and ALC that controls specification of the valve margin. Works with ALC, SHP, and FUL to allow differentiation of the lignified valve layer, the spring-loaded mechanism of fruit that promotes opening. Regulates the expression of the YJ80 marker. In Arabidopsis thaliana (Mouse-ear cress), this protein is Transcription factor IND (IND).